A 49-amino-acid chain; its full sequence is Large ribosomal subunit protein bL32 (49 aa).

This sequence belongs to the bacterial ribosomal protein bL32 family.

The sequence is that of Large ribosomal subunit protein bL32 from Nitratiruptor sp. (strain SB155-2).